The primary structure comprises 108 residues: UPF0060 membrane protein YnfA (108 aa).

The Periplasmic portion of the chain corresponds to 1-5; it reads MIKTT. Residues 6-26 form a helical membrane-spanning segment; the sequence is LLFFATALCEIIGCFLPWLWL. Residues 27–30 lie on the Cytoplasmic side of the membrane; the sequence is KRNA. A helical transmembrane segment spans residues 31-51; sequence SIWLLLPAGISLALFVWLLTL. Residues 52–60 lie on the Periplasmic side of the membrane; sequence HPAASGRVY. Residues 61–81 form a helical membrane-spanning segment; that stretch reads AAYGGVYVCTALIWLRVVDGV. Residues 82 to 84 lie on the Cytoplasmic side of the membrane; the sequence is KLS. A helical membrane pass occupies residues 85-105; that stretch reads LYDWTGALIALCGMLIIVAGW. The Periplasmic portion of the chain corresponds to 106 to 108; it reads GRT.

The protein belongs to the UPF0060 family.

The protein localises to the cell inner membrane. This is UPF0060 membrane protein YnfA from Escherichia coli (strain SMS-3-5 / SECEC).